We begin with the raw amino-acid sequence, 69 residues long: Guanine nucleotide-binding protein G(I)/G(S)/G(O) subunit gamma-T2 (69 aa).

Position 66 is a cysteine methyl ester (C66). C66 is lipidated: S-farnesyl cysteine. Residues 67–69 (IIS) constitute a propeptide, removed in mature form.

Belongs to the G protein gamma family. As to quaternary structure, g proteins are composed of 3 units, alpha, beta and gamma.

The protein localises to the cell membrane. Guanine nucleotide-binding proteins (G proteins) are involved as a modulator or transducer in various transmembrane signaling systems. The beta and gamma chains are required for the GTPase activity, for replacement of GDP by GTP, and for G protein-effector interaction. The protein is Guanine nucleotide-binding protein G(I)/G(S)/G(O) subunit gamma-T2 (GNGT2) of Bos taurus (Bovine).